The chain runs to 943 residues: Isoleucine--tRNA ligase (943 aa).

Residues 59 to 69 (PYANGQIHLGH) carry the 'HIGH' region motif. Position 577 (Glu-577) interacts with L-isoleucyl-5'-AMP. A 'KMSKS' region motif is present at residues 618–622 (KMSKS). Lys-621 provides a ligand contact to ATP. The Zn(2+) site is built by Cys-906, Cys-909, Cys-926, and Cys-929.

Belongs to the class-I aminoacyl-tRNA synthetase family. IleS type 1 subfamily. Monomer. It depends on Zn(2+) as a cofactor.

Its subcellular location is the cytoplasm. It catalyses the reaction tRNA(Ile) + L-isoleucine + ATP = L-isoleucyl-tRNA(Ile) + AMP + diphosphate. Catalyzes the attachment of isoleucine to tRNA(Ile). As IleRS can inadvertently accommodate and process structurally similar amino acids such as valine, to avoid such errors it has two additional distinct tRNA(Ile)-dependent editing activities. One activity is designated as 'pretransfer' editing and involves the hydrolysis of activated Val-AMP. The other activity is designated 'posttransfer' editing and involves deacylation of mischarged Val-tRNA(Ile). This chain is Isoleucine--tRNA ligase, found in Xylella fastidiosa (strain 9a5c).